Reading from the N-terminus, the 559-residue chain is Formate--tetrahydrofolate ligase (559 aa).

68–75 (TPAGEGKT) is a binding site for ATP.

Belongs to the formate--tetrahydrofolate ligase family.

It carries out the reaction (6S)-5,6,7,8-tetrahydrofolate + formate + ATP = (6R)-10-formyltetrahydrofolate + ADP + phosphate. It functions in the pathway one-carbon metabolism; tetrahydrofolate interconversion. The protein is Formate--tetrahydrofolate ligase of Rhizobium rhizogenes (strain K84 / ATCC BAA-868) (Agrobacterium radiobacter).